Here is a 191-residue protein sequence, read N- to C-terminus: Fe/S biogenesis protein NfuA (191 aa).

Residues Cys149 and Cys152 each coordinate [4Fe-4S] cluster.

This sequence belongs to the NfuA family. As to quaternary structure, homodimer. The cofactor is [4Fe-4S] cluster.

In terms of biological role, involved in iron-sulfur cluster biogenesis. Binds a 4Fe-4S cluster, can transfer this cluster to apoproteins, and thereby intervenes in the maturation of Fe/S proteins. Could also act as a scaffold/chaperone for damaged Fe/S proteins. The polypeptide is Fe/S biogenesis protein NfuA (Salmonella choleraesuis (strain SC-B67)).